The chain runs to 598 residues: Urease subunit alpha (598 aa).

Positions 136 to 598 (GGLDTHVHWL…APLAQRYFLF (463 aa)) constitute a Urease domain. Residues histidine 141, histidine 143, and lysine 223 each coordinate Ni(2+). Position 223 is an N6-carboxylysine (lysine 223). Residue histidine 225 coordinates substrate. Ni(2+) contacts are provided by histidine 252 and histidine 278. The Proton donor role is filled by histidine 326. Position 366 (aspartate 366) interacts with Ni(2+).

It belongs to the metallo-dependent hydrolases superfamily. Urease alpha subunit family. Heterotrimer of UreA (gamma), UreB (beta) and UreC (alpha) subunits. Three heterotrimers associate to form the active enzyme. The cofactor is Ni cation. Carboxylation allows a single lysine to coordinate two nickel ions.

The protein resides in the cytoplasm. It carries out the reaction urea + 2 H2O + H(+) = hydrogencarbonate + 2 NH4(+). The protein operates within nitrogen metabolism; urea degradation; CO(2) and NH(3) from urea (urease route): step 1/1. This chain is Urease subunit alpha, found in Ureaplasma urealyticum serovar 10 (strain ATCC 33699 / Western).